A 110-amino-acid chain; its full sequence is Large ribosomal subunit protein uL22 (110 aa).

Belongs to the universal ribosomal protein uL22 family. As to quaternary structure, part of the 50S ribosomal subunit.

In terms of biological role, this protein binds specifically to 23S rRNA; its binding is stimulated by other ribosomal proteins, e.g. L4, L17, and L20. It is important during the early stages of 50S assembly. It makes multiple contacts with different domains of the 23S rRNA in the assembled 50S subunit and ribosome. The globular domain of the protein is located near the polypeptide exit tunnel on the outside of the subunit, while an extended beta-hairpin is found that lines the wall of the exit tunnel in the center of the 70S ribosome. In Pseudomonas savastanoi pv. phaseolicola (strain 1448A / Race 6) (Pseudomonas syringae pv. phaseolicola (strain 1448A / Race 6)), this protein is Large ribosomal subunit protein uL22.